The sequence spans 341 residues: Protein DOWNY MILDEW RESISTANCE 6 (341 aa).

The 101-residue stretch at 188-288 folds into the Fe2OG dioxygenase domain; the sequence is QGQHMAVNYY…RLSVASFLCP (101 aa). Fe cation-binding residues include H212, D214, and H269. R279 contacts 2-oxoglutarate.

The protein belongs to the iron/ascorbate-dependent oxidoreductase family. Requires Fe(2+) as cofactor.

The catalysed reaction is salicylate + NADH + O2 + H(+) = 2,3-dihydroxybenzoate + NAD(+) + H2O. Its function is as follows. Converts salicylic acid (SA) to 2,3-dihydroxybenzoic acid (2,3-DHBA). Suppressor of immunity. Regulates negatively defense associated genes expression (e.g. PR-1, PR-2, and PR-5). Negative regulator of defense against Hyaloperonospora arabidopsidis. Functionally, (Microbial infection) Required for susceptibility to the downy mildew pathogen Hyaloperonospora arabidopsidis. (Microbial infection) Required for susceptibility to Pseudomonas syringae pv. tomato DC3000. In terms of biological role, (Microbial infection) Required for susceptibility to the oomycete Phytophthora capsici. This Arabidopsis thaliana (Mouse-ear cress) protein is Protein DOWNY MILDEW RESISTANCE 6.